The primary structure comprises 586 residues: MSRNSGTTLEDGPLHADPTTEAPNNATVTTNVTANDENTEKEVDADAAAAAPAEAPKPNQGFRFWAIVAALAFTALLSSLEGTIITSALPKITADLGGGNSFIWVPNGYFLATIVMLPLMAQASNLFGRRWLTLISVATFTLGSGICGGANSQAMLIGGRVVQGFGGGGIALMINIILTDLVPLRERGKYMGIVQMVSAVGAALGPFLGGLLTSKSTWRWVFYINLPIGGTSLVALFFFLRVAKPPPTTLAEKISRIDFSGNAIFIASTVSVLIGVTWGGAVYPWSSFRVIVPLVLGFFGLGLFVVYEWTVAKNPSLPKDIILNRTAATVLGVTFLHTVATYWSFYFMPIYFQAVKGETSFWSGVDTLPLFAGIFPFAILGGMLLAKFGRYKPMHLIGMAIITLSFGLFSLLDQGSSKAAWACFQLLFAVGAGLMIAILLPAMQAPLPESLVALSTGVWTFVRGFGTVWGVTIPSAIFNNQCRLKAADLSDQGVASHLNSGKAYQYATKDFLDSIHDDATRRQVVELFTSSLRTVWYVGVALAGFGWLLIWLEKEVTLRSKLNTKFGLEEKKKAAKADEDVESASA.

The segment at 1–56 (MSRNSGTTLEDGPLHADPTTEAPNNATVTTNVTANDENTEKEVDADAAAAAPAEAP) is disordered. 2 stretches are compositionally biased toward low complexity: residues 19 to 36 (TTEAPNNATVTTNVTAND) and 46 to 56 (DAAAAAPAEAP). Asn25 and Asn31 each carry an N-linked (GlcNAc...) asparagine glycan. Helical transmembrane passes span 65–85 (WAIVAALAFTALLSSLEGTII), 101–121 (SFIWVPNGYFLATIVMLPLMA), 131–151 (WLTLISVATFTLGSGICGGAN), 164–184 (GFGGGGIALMINIILTDLVPL), 192–212 (GIVQMVSAVGAALGPFLGGLL), 220–240 (WVFYINLPIGGTSLVALFFFL), 263–283 (AIFIASTVSVLIGVTWGGAVY), and 290–310 (VIVPLVLGFFGLGLFVVYEWT). N-linked (GlcNAc...) asparagine glycosylation occurs at Asn324. The next 6 membrane-spanning stretches (helical) occupy residues 330–350 (VLGVTFLHTVATYWSFYFMPI), 368–388 (LPLFAGIFPFAILGGMLLAKF), 393–413 (PMHLIGMAIITLSFGLFSLLD), 420–440 (AWACFQLLFAVGAGLMIAILL), 458–478 (VWTFVRGFGTVWGVTIPSAIF), and 532–552 (LRTVWYVGVALAGFGWLLIWL).

The protein belongs to the major facilitator superfamily.

The protein resides in the membrane. MFS-type transporter; part of the gene cluster that mediates the biosynthesis of UCS1025A, a member of the pyrrolizidinone family that acts as a strong telomerase inhibitor and displays potent antibacterial and antitumor properties. These compounds share a hemiaminal-containing pyrrolizidinone core fused with a gamma-lactone, giving a furopyrrolizidine that is connected to a decalin fragment. The polypeptide is MFS-type transporter ucsD (Acremonium sp).